Reading from the N-terminus, the 108-residue chain is uncharacterized protein (108 aa).

Residues 1-21 form the signal peptide; the sequence is MFRSLFLAAALMAFTPLAANA.

The protein to E.coli YaaX.

This is an uncharacterized protein from Escherichia coli O157:H7.